Here is a 155-residue protein sequence, read N- to C-terminus: Ribosome maturation factor RimP (155 aa).

This sequence belongs to the RimP family.

Its subcellular location is the cytoplasm. Required for maturation of 30S ribosomal subunits. The protein is Ribosome maturation factor RimP of Lachnoclostridium phytofermentans (strain ATCC 700394 / DSM 18823 / ISDg) (Clostridium phytofermentans).